The following is a 420-amino-acid chain: Cysteate-C-fatty acyltransferase (420 aa).

Pyridoxal 5'-phosphate-binding positions include 114–115, His219, Thr247, and Ala249; that span reads GY. Residue Lys250 is modified to N6-(pyridoxal phosphate)lysine.

This sequence belongs to the class-II pyridoxal-phosphate-dependent aminotransferase family. Pyridoxal 5'-phosphate is required as a cofactor.

The enzyme catalyses isopentadecanoyl-CoA + L-cysteate + H(+) = 3-oxocapnine + CO2 + CoA. The protein operates within lipid metabolism. Its function is as follows. Transferase involved in the biosynthesis of capnine, a sulfonolipid present in the outer membrane of gliding Bacteroidetes and essential for gliding motility. Catalyzes the formation of 3-dehydrocapnine from cysteate and isopentadecanoyl-CoA (13-methyl-myristoyl-CoA). In vitro, products are also detected when 13-methyl-myristic acid is substituted with tridecylic acid, myristic acid, pentadecanoic acid or palmitic acid. The protein is Cysteate-C-fatty acyltransferase of Capnocytophaga ochracea (strain ATCC 27872 / DSM 7271 / CCUG 9716 / JCM 12966 / NCTC 12371 / SS31 / VPI 2845) (Bacteroides ochraceus).